A 498-amino-acid chain; its full sequence is Protein flp (498 aa).

The next 4 membrane-spanning stretches (helical) occupy residues 6-26 (LYFL…IHIT), 389-409 (FNIV…FSAY), 433-453 (LTLC…YLIL), and 471-491 (LALI…LLFL).

The protein resides in the cell membrane. Its precise function is unknown. Has no penicillin-binding activity and is not involved in methicillin resistance. The sequence is that of Protein flp (flp) from Staphylococcus aureus (strain MW2).